A 233-amino-acid polypeptide reads, in one-letter code: tRNA (guanine-N(1)-)-methyltransferase (233 aa).

S-adenosyl-L-methionine contacts are provided by residues G110 and 130 to 135 (IGDYVM).

This sequence belongs to the RNA methyltransferase TrmD family. In terms of assembly, homodimer.

It localises to the cytoplasm. It carries out the reaction guanosine(37) in tRNA + S-adenosyl-L-methionine = N(1)-methylguanosine(37) in tRNA + S-adenosyl-L-homocysteine + H(+). In terms of biological role, specifically methylates guanosine-37 in various tRNAs. The chain is tRNA (guanine-N(1)-)-methyltransferase from Finegoldia magna (strain ATCC 29328 / DSM 20472 / WAL 2508) (Peptostreptococcus magnus).